We begin with the raw amino-acid sequence, 317 residues long: MESPPMFNSVEDECRYWKERSKQYHKEWTDVKQEYDEFVEQSREMEIEMDATLDQKQSIIKDLTAKLTMFERENESLKLKLESHGIDMSNMEKQLETVKKDRDTMKVYLRQLEQKNDDLERAHRILNESIENFEKMLDQAYEKNALLELEVDEKGLLQEKLQRLMDETRDLKQELNVKSRFTPVVNGTSVPTANDTNTVNSSMNSSASLPNGIVANGELVKHDNAVATRATSVSVNALNGSLVNRNEYNQQHSLKSDGDETEDVPREWSANAAATPLLPAIHTSGAGRTALLLAGCRVVWILQFSVIHKPQIRNPIT.

A coiled-coil region spans residues 29–180 (TDVKQEYDEF…LKQELNVKSR (152 aa)). The tract at residues 186 to 205 (NGTSVPTANDTNTVNSSMNS) is disordered.

This sequence belongs to the nudE family.

The protein localises to the cytoplasm. The protein resides in the cytoskeleton. Its subcellular location is the microtubule organizing center. It is found in the centrosome. It localises to the spindle. Functionally, chaperone protein with functions in nuclear localization. Required for centrosome duplication and formation and function of the mitotic spindle. In postmitotic neurons, acts with nudC downstream of dar1 to ensure correct positioning of the nuclei in primary dendrites and as a consequence, is required for determining multipolar neuron morphology. This is Nuclear distribution protein nudE homolog from Drosophila melanogaster (Fruit fly).